A 405-amino-acid polypeptide reads, in one-letter code: Mevalonate 3,5-bisphosphate decarboxylase (405 aa).

This sequence belongs to the mevalonate 3,5-bisphosphate decarboxylase family. As to quaternary structure, homodimer.

The catalysed reaction is (R)-3,5-bisphosphomevalonate + H(+) = isopentenyl phosphate + phosphate + CO2. It participates in isoprenoid biosynthesis; isopentenyl diphosphate biosynthesis via mevalonate pathway. Functionally, catalyzes the ATP-independent decarboxylation of (R)-mevalonate 3,5-bisphosphate to isopentenyl phosphate. Functions in an alternative mevalonate pathway, only present in extreme acidophiles of the Thermoplasmatales order, which passes through mevalonate 3-phosphate rather than mevalonate 5-phosphate. The sequence is that of Mevalonate 3,5-bisphosphate decarboxylase from Thermoplasma acidophilum (strain ATCC 25905 / DSM 1728 / JCM 9062 / NBRC 15155 / AMRC-C165).